Reading from the N-terminus, the 739-residue chain is NAD(P)H-quinone oxidoreductase subunit 5, chloroplastic (739 aa).

Transmembrane regions (helical) follow at residues 9–29, 40–60, 89–109, 125–145, 147–167, 185–205, 219–239, 258–278, 286–306, 327–347, 354–374, 396–416, 425–445, 543–563, 602–622, and 717–737; these read WIIP…LILF, WAFQ…YLSI, IDPL…MVLI, FAYM…SNLI, IYIF…FWFT, GDFG…SFEF, NEVN…GAVA, TPIS…FLVA, VIPY…LLGA, LGYM…FHLI, ALLF…VGYS, ITFL…CFWS, WLYS…TAFY, LFPI…GIPF, VVSV…YKPI, and SYLF…YLLF.

It belongs to the complex I subunit 5 family. In terms of assembly, NDH is composed of at least 16 different subunits, 5 of which are encoded in the nucleus.

It is found in the plastid. The protein resides in the chloroplast thylakoid membrane. It catalyses the reaction a plastoquinone + NADH + (n+1) H(+)(in) = a plastoquinol + NAD(+) + n H(+)(out). The catalysed reaction is a plastoquinone + NADPH + (n+1) H(+)(in) = a plastoquinol + NADP(+) + n H(+)(out). Functionally, NDH shuttles electrons from NAD(P)H:plastoquinone, via FMN and iron-sulfur (Fe-S) centers, to quinones in the photosynthetic chain and possibly in a chloroplast respiratory chain. The immediate electron acceptor for the enzyme in this species is believed to be plastoquinone. Couples the redox reaction to proton translocation, and thus conserves the redox energy in a proton gradient. This chain is NAD(P)H-quinone oxidoreductase subunit 5, chloroplastic (ndhF), found in Solanum tuberosum (Potato).